The primary structure comprises 508 residues: Glycerol kinase (508 aa).

An ADP-binding site is contributed by Thr14. ATP contacts are provided by Thr14, Thr15, and Ser16. Thr14 lines the sn-glycerol 3-phosphate pocket. Residue Arg18 participates in ADP binding. Sn-glycerol 3-phosphate is bound by residues Arg84, Glu85, and Tyr136. Glycerol contacts are provided by Arg84, Glu85, and Tyr136. A Phosphohistidine; by HPr modification is found at His232. Asp246 provides a ligand contact to sn-glycerol 3-phosphate. Residues Asp246 and Gln247 each contribute to the glycerol site. Residues Thr268 and Gly311 each coordinate ADP. Residues Thr268, Gly311, Gln315, and Gly412 each contribute to the ATP site. ADP is bound by residues Gly412 and Asn416.

This sequence belongs to the FGGY kinase family. As to quaternary structure, homotetramer and homodimer (in equilibrium). Post-translationally, the phosphoenolpyruvate-dependent sugar phosphotransferase system (PTS), including enzyme I, and histidine-containing protein (HPr) are required for the phosphorylation, which leads to the activation of the enzyme.

It carries out the reaction glycerol + ATP = sn-glycerol 3-phosphate + ADP + H(+). Its pathway is polyol metabolism; glycerol degradation via glycerol kinase pathway; sn-glycerol 3-phosphate from glycerol: step 1/1. Its activity is regulated as follows. Activated by phosphorylation and inhibited by fructose 1,6-bisphosphate (FBP). Its function is as follows. Key enzyme in the regulation of glycerol uptake and metabolism. Catalyzes the phosphorylation of glycerol to yield sn-glycerol 3-phosphate. The polypeptide is Glycerol kinase (Streptococcus pyogenes serotype M3 (strain ATCC BAA-595 / MGAS315)).